The sequence spans 129 residues: Small ribosomal subunit protein uS9 (129 aa).

It belongs to the universal ribosomal protein uS9 family.

This is Small ribosomal subunit protein uS9 (rpsI) from Treponema pallidum (strain Nichols).